Consider the following 493-residue polypeptide: 2-amino-4-deoxychorismate synthase (493 aa).

The protein belongs to the anthranilate synthase component I family. Requires Mg(2+) as cofactor.

The enzyme catalyses (2S)-2-amino-4-deoxychorismate + L-glutamate = chorismate + L-glutamine. Functionally, converts chorismate to 2-amino-4-deoxychorismate (ADIC). Involved in the biosynthesis of the benzoxazolinate moiety of the enediyne antitumor antibiotic C-1027. The sequence is that of 2-amino-4-deoxychorismate synthase (sgcD) from Streptomyces globisporus.